The chain runs to 186 residues: ATP synthase subunit b (186 aa).

The chain crosses the membrane as a helical span at residues 25-45 (IVWSVVCVAIIAVVFYKYVIP).

It belongs to the ATPase B chain family. In terms of assembly, F-type ATPases have 2 components, F(1) - the catalytic core - and F(0) - the membrane proton channel. F(1) has five subunits: alpha(3), beta(3), gamma(1), delta(1), epsilon(1). F(0) has three main subunits: a(1), b(2) and c(10-14). The alpha and beta chains form an alternating ring which encloses part of the gamma chain. F(1) is attached to F(0) by a central stalk formed by the gamma and epsilon chains, while a peripheral stalk is formed by the delta and b chains.

It localises to the cell membrane. F(1)F(0) ATP synthase produces ATP from ADP in the presence of a proton or sodium gradient. F-type ATPases consist of two structural domains, F(1) containing the extramembraneous catalytic core and F(0) containing the membrane proton channel, linked together by a central stalk and a peripheral stalk. During catalysis, ATP synthesis in the catalytic domain of F(1) is coupled via a rotary mechanism of the central stalk subunits to proton translocation. Functionally, component of the F(0) channel, it forms part of the peripheral stalk, linking F(1) to F(0). The sequence is that of ATP synthase subunit b from Nocardia farcinica (strain IFM 10152).